Reading from the N-terminus, the 294-residue chain is UDP-3-O-acyl-N-acetylglucosamine deacetylase (294 aa).

H75, H232, and D236 together coordinate Zn(2+). The active-site Proton donor is H259.

Belongs to the LpxC family. Zn(2+) is required as a cofactor.

The catalysed reaction is a UDP-3-O-[(3R)-3-hydroxyacyl]-N-acetyl-alpha-D-glucosamine + H2O = a UDP-3-O-[(3R)-3-hydroxyacyl]-alpha-D-glucosamine + acetate. The protein operates within glycolipid biosynthesis; lipid IV(A) biosynthesis; lipid IV(A) from (3R)-3-hydroxytetradecanoyl-[acyl-carrier-protein] and UDP-N-acetyl-alpha-D-glucosamine: step 2/6. Functionally, catalyzes the hydrolysis of UDP-3-O-myristoyl-N-acetylglucosamine to form UDP-3-O-myristoylglucosamine and acetate, the committed step in lipid A biosynthesis. The sequence is that of UDP-3-O-acyl-N-acetylglucosamine deacetylase from Campylobacter curvus (strain 525.92).